The chain runs to 968 residues: RNA polymerase-associated protein RapA (968 aa).

Residues 164–334 (DVGRRHAPRV…FARLRLLDPN (171 aa)) enclose the Helicase ATP-binding domain. Residue 177–184 (DEVGLGKT) participates in ATP binding. The DEAH box signature appears at 280 to 283 (DEAH). Residues 490 to 662 (RVEWLMGYLT…YLASPDQTEG (173 aa)) form the Helicase C-terminal domain.

This sequence belongs to the SNF2/RAD54 helicase family. RapA subfamily. Interacts with the RNAP. Has a higher affinity for the core RNAP than for the holoenzyme. Its ATPase activity is stimulated by binding to RNAP.

Transcription regulator that activates transcription by stimulating RNA polymerase (RNAP) recycling in case of stress conditions such as supercoiled DNA or high salt concentrations. Probably acts by releasing the RNAP, when it is trapped or immobilized on tightly supercoiled DNA. Does not activate transcription on linear DNA. Probably not involved in DNA repair. The sequence is that of RNA polymerase-associated protein RapA from Escherichia coli O9:H4 (strain HS).